Consider the following 603-residue polypeptide: Elongation factor 4 (603 aa).

A tr-type G domain is found at 7-189 (VRIRNFCIIA…AVVERVPPPP (183 aa)). GTP is bound by residues 19-24 (DHGKST) and 136-139 (NKID).

It belongs to the TRAFAC class translation factor GTPase superfamily. Classic translation factor GTPase family. LepA subfamily.

It is found in the cell inner membrane. It carries out the reaction GTP + H2O = GDP + phosphate + H(+). In terms of biological role, required for accurate and efficient protein synthesis under certain stress conditions. May act as a fidelity factor of the translation reaction, by catalyzing a one-codon backward translocation of tRNAs on improperly translocated ribosomes. Back-translocation proceeds from a post-translocation (POST) complex to a pre-translocation (PRE) complex, thus giving elongation factor G a second chance to translocate the tRNAs correctly. Binds to ribosomes in a GTP-dependent manner. The polypeptide is Elongation factor 4 (Nostoc sp. (strain PCC 7120 / SAG 25.82 / UTEX 2576)).